A 167-amino-acid chain; its full sequence is Endoribonuclease YbeY (167 aa).

Residues H131, H135, and H141 each coordinate Zn(2+).

It belongs to the endoribonuclease YbeY family. Requires Zn(2+) as cofactor.

It localises to the cytoplasm. Functionally, single strand-specific metallo-endoribonuclease involved in late-stage 70S ribosome quality control and in maturation of the 3' terminus of the 16S rRNA. This is Endoribonuclease YbeY from Rickettsia felis (strain ATCC VR-1525 / URRWXCal2) (Rickettsia azadi).